Here is a 438-residue protein sequence, read N- to C-terminus: Methylenetetrahydrofolate--tRNA-(uracil-5-)-methyltransferase TrmFO (438 aa).

9-14 (GGGLAG) contacts FAD.

It belongs to the MnmG family. TrmFO subfamily. FAD is required as a cofactor.

It is found in the cytoplasm. It carries out the reaction uridine(54) in tRNA + (6R)-5,10-methylene-5,6,7,8-tetrahydrofolate + NADH + H(+) = 5-methyluridine(54) in tRNA + (6S)-5,6,7,8-tetrahydrofolate + NAD(+). It catalyses the reaction uridine(54) in tRNA + (6R)-5,10-methylene-5,6,7,8-tetrahydrofolate + NADPH + H(+) = 5-methyluridine(54) in tRNA + (6S)-5,6,7,8-tetrahydrofolate + NADP(+). Functionally, catalyzes the folate-dependent formation of 5-methyl-uridine at position 54 (M-5-U54) in all tRNAs. In Lactobacillus johnsonii (strain CNCM I-12250 / La1 / NCC 533), this protein is Methylenetetrahydrofolate--tRNA-(uracil-5-)-methyltransferase TrmFO.